Reading from the N-terminus, the 890-residue chain is DNA mismatch repair protein MutS (890 aa).

Residue 607 to 614 coordinates ATP; sequence GPNMSGKS. The segment at 832–851 is disordered; that stretch reads ESQLSFFGTEQSSKKQDKPV.

This sequence belongs to the DNA mismatch repair MutS family.

Functionally, this protein is involved in the repair of mismatches in DNA. It is possible that it carries out the mismatch recognition step. This protein has a weak ATPase activity. The polypeptide is DNA mismatch repair protein MutS (Bacillus cereus (strain 03BB102)).